The chain runs to 194 residues: Glycerol-3-phosphate acyltransferase (194 aa).

5 helical membrane-spanning segments follow: residues 4–24 (ELILTAVAYIVGSIPTGLLLA), 80–100 (WVAAVGLAAFLGHVYTIFLGF), 112–132 (VFLGVSPLSVLGALALFIGIV), 137–157 (YISLGSIIAAAAMPLFVAAVE), and 161–181 (LLVGMTLVIAVIVIVKHRENI).

The protein belongs to the PlsY family. Probably interacts with PlsX.

Its subcellular location is the cell inner membrane. It catalyses the reaction an acyl phosphate + sn-glycerol 3-phosphate = a 1-acyl-sn-glycero-3-phosphate + phosphate. It participates in lipid metabolism; phospholipid metabolism. Catalyzes the transfer of an acyl group from acyl-phosphate (acyl-PO(4)) to glycerol-3-phosphate (G3P) to form lysophosphatidic acid (LPA). This enzyme utilizes acyl-phosphate as fatty acyl donor, but not acyl-CoA or acyl-ACP. The chain is Glycerol-3-phosphate acyltransferase from Geobacter sulfurreducens (strain ATCC 51573 / DSM 12127 / PCA).